A 357-amino-acid chain; its full sequence is Cytoplasmic tRNA 2-thiolation protein 1 (357 aa).

The interval 314–348 is disordered; that stretch reads GVSRTRGRRGEKAGLHPDVGRGGGGGSSGPAEVAS. Basic and acidic residues predominate over residues 321–332; sequence RRGEKAGLHPDV.

The protein belongs to the TtcA family. CTU1/NCS6/ATPBD3 subfamily.

Its subcellular location is the cytoplasm. The protein operates within tRNA modification; 5-methoxycarbonylmethyl-2-thiouridine-tRNA biosynthesis. Its function is as follows. Plays a central role in 2-thiolation of mcm(5)S(2)U at tRNA wobble positions of tRNA(Lys), tRNA(Glu) and tRNA(Gln). Directly binds tRNAs and probably acts by catalyzing adenylation of tRNAs, an intermediate required for 2-thiolation. It is unclear whether it acts as a sulfurtransferase that transfers sulfur from thiocarboxylated URM1 onto the uridine of tRNAs at wobble position. In Chlamydomonas reinhardtii (Chlamydomonas smithii), this protein is Cytoplasmic tRNA 2-thiolation protein 1.